Here is a 202-residue protein sequence, read N- to C-terminus: Nucleoside triphosphate pyrophosphatase (202 aa).

The Proton acceptor role is filled by Asp-77.

Belongs to the Maf family. A divalent metal cation is required as a cofactor.

The protein localises to the cytoplasm. The catalysed reaction is a ribonucleoside 5'-triphosphate + H2O = a ribonucleoside 5'-phosphate + diphosphate + H(+). It carries out the reaction a 2'-deoxyribonucleoside 5'-triphosphate + H2O = a 2'-deoxyribonucleoside 5'-phosphate + diphosphate + H(+). Functionally, nucleoside triphosphate pyrophosphatase. May have a dual role in cell division arrest and in preventing the incorporation of modified nucleotides into cellular nucleic acids. In Rickettsia canadensis (strain McKiel), this protein is Nucleoside triphosphate pyrophosphatase.